The sequence spans 258 residues: UPF0246 protein ABO_1338 (258 aa).

This sequence belongs to the UPF0246 family.

This is UPF0246 protein ABO_1338 from Alcanivorax borkumensis (strain ATCC 700651 / DSM 11573 / NCIMB 13689 / SK2).